Reading from the N-terminus, the 463-residue chain is UDP-N-acetylmuramoyl-L-alanyl-D-glutamate--2,6-diaminopimelate ligase (463 aa).

Residue Thr-21 coordinates UDP-N-acetyl-alpha-D-muramoyl-L-alanyl-D-glutamate. An ATP-binding site is contributed by 94-100 (GTNGKTT). Residues 137–138 (TT), Ser-164, Gln-170, and Arg-172 contribute to the UDP-N-acetyl-alpha-D-muramoyl-L-alanyl-D-glutamate site. The residue at position 204 (Lys-204) is an N6-carboxylysine. Meso-2,6-diaminopimelate is bound by residues Arg-358, 382-385 (DNPR), Gly-433, and Glu-437. The Meso-diaminopimelate recognition motif motif lies at 382–385 (DNPR).

This sequence belongs to the MurCDEF family. MurE subfamily. Mg(2+) serves as cofactor. Carboxylation is probably crucial for Mg(2+) binding and, consequently, for the gamma-phosphate positioning of ATP.

The protein resides in the cytoplasm. The catalysed reaction is UDP-N-acetyl-alpha-D-muramoyl-L-alanyl-D-glutamate + meso-2,6-diaminopimelate + ATP = UDP-N-acetyl-alpha-D-muramoyl-L-alanyl-gamma-D-glutamyl-meso-2,6-diaminopimelate + ADP + phosphate + H(+). Its pathway is cell wall biogenesis; peptidoglycan biosynthesis. Its function is as follows. Catalyzes the addition of meso-diaminopimelic acid to the nucleotide precursor UDP-N-acetylmuramoyl-L-alanyl-D-glutamate (UMAG) in the biosynthesis of bacterial cell-wall peptidoglycan. The protein is UDP-N-acetylmuramoyl-L-alanyl-D-glutamate--2,6-diaminopimelate ligase of Helicobacter hepaticus (strain ATCC 51449 / 3B1).